The chain runs to 553 residues: MDIKRTILWVIFSLSVVLLFDNWQRANGHQSMFFPTPQTVTTTAAAPGGTPAGDVPKAAAPAAAGSQAAPATGAVSQTPASEKIVVTTDVIRATVDTAGAIVTKLELLTQKDHDGNPMVLFDRSLERTYLARSGLIGGDFPNHTTVFTASAGPRDLGTGGEVSLTLTADKGGAKLAKTYVFKRGSYVIDTRFDVTNDGAAPINPTLYMELARDGGAVEQSRFYSTFTGPAVYTDTDHYHKITFADIDKSKAHVPAPTDSGWVAMVQHYFASAWIPAASAKREFYVDRIDTNFYRVGMQQALGTVAPGASVSATARLFAGPQEERMLEGITPGLELVKDYGWLTIIAKPLFWLLEKIHKLLGNWGWSIVALTVLVKLVFFPLSATSYRSMAKMKDLQPRMTAIRERHKGDPQKMNQEMMTLYRTEKVNPLGGCLPIVIQIPVFIALYWVLLSSVEMRGAPWLGWVHDLASPDPFYILPILMAVSMFVQTRLNPTPPDPVQAKMMMFMPIAFSVMFFFFPAGLVLYWVVNNCLSIAQQWSINRMLGTNKKAAAAK.

A helical membrane pass occupies residues 3–23 (IKRTILWVIFSLSVVLLFDNW). The segment at 44 to 64 (AAAPGGTPAGDVPKAAAPAAA) is disordered. 4 consecutive transmembrane segments (helical) span residues 359–379 (LLGN…LVFF), 429–449 (LGGC…YWVL), 467–487 (LASP…MFVQ), and 507–527 (PIAF…YWVV).

Belongs to the OXA1/ALB3/YidC family. Type 1 subfamily. As to quaternary structure, interacts with the Sec translocase complex via SecD. Specifically interacts with transmembrane segments of nascent integral membrane proteins during membrane integration.

It localises to the cell inner membrane. Required for the insertion and/or proper folding and/or complex formation of integral membrane proteins into the membrane. Involved in integration of membrane proteins that insert both dependently and independently of the Sec translocase complex, as well as at least some lipoproteins. Aids folding of multispanning membrane proteins. This Ralstonia nicotianae (strain ATCC BAA-1114 / GMI1000) (Ralstonia solanacearum) protein is Membrane protein insertase YidC.